The primary structure comprises 70 residues: Sporulation protein YhaL (70 aa).

Residues 3-23 (FFPWWVYLCIVGIIFSAYKLV) traverse the membrane as a helical segment. Positions 48–70 (MEKERERRSSQQHEEENQNHSIA) are disordered.

Its subcellular location is the cell membrane. Functionally, required for efficient sporulation. In Bacillus subtilis (strain 168), this protein is Sporulation protein YhaL (yhaL).